A 147-amino-acid polypeptide reads, in one-letter code: NADH-ubiquinone oxidoreductase chain 3 (147 aa).

The next 3 membrane-spanning stretches (helical) occupy residues 6 to 26, 60 to 80, and 84 to 104; these read LFILFVSIIALLFLLINLVFA, AICFVILDLEIFTMFPYVGSL, and TFYSLVVILGFMFVVSAGFVF.

This sequence belongs to the complex I subunit 3 family.

The protein resides in the mitochondrion membrane. The catalysed reaction is a ubiquinone + NADH + 5 H(+)(in) = a ubiquinol + NAD(+) + 4 H(+)(out). Its function is as follows. Core subunit of the mitochondrial membrane respiratory chain NADH dehydrogenase (Complex I) that is believed to belong to the minimal assembly required for catalysis. Complex I functions in the transfer of electrons from NADH to the respiratory chain. The immediate electron acceptor for the enzyme is believed to be ubiquinone. In Neurospora crassa (strain ATCC 24698 / 74-OR23-1A / CBS 708.71 / DSM 1257 / FGSC 987), this protein is NADH-ubiquinone oxidoreductase chain 3 (ndh-3).